Consider the following 290-residue polypeptide: Ribonuclease HIII (290 aa).

An RNase H type-2 domain is found at Leu78–Ala290. The a divalent metal cation site is built by Asp84, Glu85, and Asp187.

It belongs to the RNase HII family. RnhC subfamily. It depends on Mn(2+) as a cofactor. Mg(2+) is required as a cofactor.

It is found in the cytoplasm. It carries out the reaction Endonucleolytic cleavage to 5'-phosphomonoester.. Its function is as follows. Endonuclease that specifically degrades the RNA of RNA-DNA hybrids. This is Ribonuclease HIII from Streptococcus pneumoniae (strain CGSP14).